The chain runs to 559 residues: Hepatocyte nuclear factor 1-alpha (559 aa).

The HNF-p1 domain occupies 13-44 (GPGRLSALQEQLIWALLGSGLSREVLVHALGE). The segment at 14-43 (PGRLSALQEQLIWALLGSGLSREVLVHALG) is dimerization. A compositionally biased stretch (basic and acidic residues) spans 49-62 (RVTPGAEKGDRGDG). The disordered stretch occupies residues 49–73 (RVTPGAEKGDRGDGESSEEGEMDFP). Residues 78–173 (QELEALAPEE…ISQQFTNARH (96 aa)) enclose the POU-specific atypical domain. Interaction with DNA regions lie at residues 121 to 123 (QRE), 134 to 140 (HLSQHLN), 146 to 149 (KNQK), 192 to 195 (RFKW), 252 to 254 (RVY), and 259 to 262 (NRRK). The Nuclear localization signal motif lies at 186–194 (RKGRRNRFK). The homeobox; HNF1-type DNA-binding region spans 188–268 (GRRNRFKWGP…NRRKEEAFRH (81 aa)). A disordered region spans residues 492-559 (TDPEEQTDQP…IPAQMVSTAQ (68 aa)). Over residues 499-522 (DQPIQEDSLHLQSPSPVPVSSGNL) the composition is skewed to polar residues.

It belongs to the HNF1 homeobox family. As to quaternary structure, binds DNA as a dimer. Expressed in liver, intestine, spleen and kidney.

The protein resides in the nucleus. In terms of biological role, transcriptional activator that regulates the tissue specific expression of multiple genes, especially in pancreas and liver. Binds to the promoter of the albumin gene. The polypeptide is Hepatocyte nuclear factor 1-alpha (hnf1a) (Salmo salar (Atlantic salmon)).